A 497-amino-acid chain; its full sequence is Tripartite motif-containing protein 5 (497 aa).

Position 2 is an N-acetylalanine (Ala-2). The segment at 15–60 (CPICLELLTEPLSLHCGHSFCQACITANHKKSMLYKEGERSCPVCR) adopts an RING-type zinc-finger fold. Residue Ser-87 is modified to Phosphoserine. The segment at 92–133 (QKVDHCARHGEKLLLFCQEDSKVICWLCERSQEHRGHHTFLM) adopts a B box-type zinc-finger fold. The Zn(2+) site is built by Cys-97, His-100, Cys-119, and His-125. The stretch at 137–225 (AQEYHVKLQT…LTKSETEMVQ (89 aa)) forms a coiled coil. A required for interaction with GABARAP and for autophagy region spans residues 187-200 (FEQLREILDWEESN). The B30.2/SPRY domain maps to 283 to 497 (LKGMLDMFRE…VPMTLCSPSS (215 aa)).

Belongs to the TRIM/RBCC family. In terms of assembly, can form homodimers and homotrimers. In addition to lower-order dimerization, also exhibits a higher-order multimerization and both low- and high-order multimerizations are essential for its restriction activity. Interacts with MAP3K7/TAK1, TAB2 and TAB3. Interacts with HSPA8/HSC70, PSMC2, PSMC4, PSMC5 and PSMD7. Interacts with SQSTM1. Interacts (via B30.2/SPRY domain) with HSPA1A/B. Interacts with TRIM6 and TRIM34. Interacts with BECN1; GABARAP. Interacts with ULK1 (phosphorylated form), GABARAPL1, GABARAPL2, MAP1LC3A and MAP1LC3C. In terms of processing, degraded in a proteasome-independent fashion in the absence of viral infection but in a proteasome-dependent fashion following exposure to restriction sensitive virus. Autoubiquitinated in a RING finger- and UBE2D2-dependent manner. Monoubiquitinated by TRIM21. Deubiquitinated by Yersinia YopJ. Ubiquitination may not lead to proteasomal degradation.

The protein resides in the cytoplasm. It localises to the nucleus. The catalysed reaction is S-ubiquitinyl-[E2 ubiquitin-conjugating enzyme]-L-cysteine + [acceptor protein]-L-lysine = [E2 ubiquitin-conjugating enzyme]-L-cysteine + N(6)-ubiquitinyl-[acceptor protein]-L-lysine.. The protein operates within protein modification; protein ubiquitination. Capsid-specific restriction factor that prevents infection from non-host-adapted retroviruses. Blocks viral replication early in the life cycle, after viral entry but before reverse transcription. In addition to acting as a capsid-specific restriction factor, also acts as a pattern recognition receptor that activates innate immune signaling in response to the retroviral capsid lattice. Binding to the viral capsid triggers its E3 ubiquitin ligase activity, and in concert with the heterodimeric ubiquitin conjugating enzyme complex UBE2V1-UBE2N (also known as UBC13-UEV1A complex) generates 'Lys-63'-linked polyubiquitin chains, which in turn are catalysts in the autophosphorylation of the MAP3K7/TAK1 complex (includes TAK1, TAB2, and TAB3). Activation of the MAP3K7/TAK1 complex by autophosphorylation results in the induction and expression of NF-kappa-B and MAPK-responsive inflammatory genes, thereby leading to an innate immune response in the infected cell. Restricts infection by human immunodeficiency virus type 1 (HIV-1) and simian immunodeficiency virus (SIV-agm). Plays a role in regulating autophagy through activation of autophagy regulator BECN1 by causing its dissociation from its inhibitors BCL2 and TAB2. Also plays a role in autophagy by acting as a selective autophagy receptor which recognizes and targets HIV-1 capsid protein p24 for autophagic destruction. In Macaca mulatta (Rhesus macaque), this protein is Tripartite motif-containing protein 5 (TRIM5).